The primary structure comprises 131 residues: SPbeta prophage-derived UPF0715 membrane protein YopD (131 aa).

Helical transmembrane passes span 12-32 (VYTL…YLFV), 38-58 (AIAL…YLVF), 75-95 (LINF…FWFV), and 108-128 (FEYY…DSIF).

The protein belongs to the UPF0715 family.

It is found in the cell membrane. The protein is SPbeta prophage-derived UPF0715 membrane protein YopD (yopD) of Bacillus subtilis (strain 168).